The chain runs to 292 residues: Formamidopyrimidine-DNA glycosylase (292 aa).

Pro-2 functions as the Schiff-base intermediate with DNA in the catalytic mechanism. Glu-3 serves as the catalytic Proton donor. The active-site Proton donor; for beta-elimination activity is Lys-58. Residues His-103, Arg-122, and Lys-165 each coordinate DNA. The FPG-type zinc-finger motif lies at 256 to 292 (RVYDRALHPCPTPGCKGEISRITQGGRSSFFCSMCQK). Arg-282 acts as the Proton donor; for delta-elimination activity in catalysis.

This sequence belongs to the FPG family. In terms of assembly, monomer. Zn(2+) is required as a cofactor.

The enzyme catalyses Hydrolysis of DNA containing ring-opened 7-methylguanine residues, releasing 2,6-diamino-4-hydroxy-5-(N-methyl)formamidopyrimidine.. It catalyses the reaction 2'-deoxyribonucleotide-(2'-deoxyribose 5'-phosphate)-2'-deoxyribonucleotide-DNA = a 3'-end 2'-deoxyribonucleotide-(2,3-dehydro-2,3-deoxyribose 5'-phosphate)-DNA + a 5'-end 5'-phospho-2'-deoxyribonucleoside-DNA + H(+). Functionally, involved in base excision repair of DNA damaged by oxidation or by mutagenic agents. Acts as a DNA glycosylase that recognizes and removes damaged bases. Has a preference for oxidized purines, such as 7,8-dihydro-8-oxoguanine (8-oxoG). Has AP (apurinic/apyrimidinic) lyase activity and introduces nicks in the DNA strand. Cleaves the DNA backbone by beta-delta elimination to generate a single-strand break at the site of the removed base with both 3'- and 5'-phosphates. This chain is Formamidopyrimidine-DNA glycosylase, found in Methylocella silvestris (strain DSM 15510 / CIP 108128 / LMG 27833 / NCIMB 13906 / BL2).